The following is a 147-amino-acid chain: Large ribosomal subunit protein uL22c (147 aa).

This sequence belongs to the universal ribosomal protein uL22 family. As to quaternary structure, part of the 50S ribosomal subunit.

It localises to the plastid. This protein binds specifically to 23S rRNA. Its function is as follows. The globular domain of the protein is located near the polypeptide exit tunnel on the outside of the subunit, while an extended beta-hairpin is found that lines the wall of the exit tunnel in the center of the 70S ribosome. The sequence is that of Large ribosomal subunit protein uL22c (rpl22) from Cuscuta gronovii (Common dodder).